The following is a 300-amino-acid chain: UPF0282 protein TON_1363 (300 aa).

Belongs to the UPF0282 family.

This is UPF0282 protein TON_1363 from Thermococcus onnurineus (strain NA1).